Reading from the N-terminus, the 131-residue chain is Fumarate reductase subunit C (131 aa).

3 helical membrane-spanning segments follow: residues 30–50 (EGTC…VFAL), 58–78 (AGFV…VTLI), and 109–129 (IVRG…AVAL).

It belongs to the FrdC family. Part of an enzyme complex containing four subunits: a flavoprotein (FrdA), an iron-sulfur protein (FrdB), and two hydrophobic anchor proteins (FrdC and FrdD).

The protein localises to the cell inner membrane. In terms of biological role, two distinct, membrane-bound, FAD-containing enzymes are responsible for the catalysis of fumarate and succinate interconversion; fumarate reductase is used in anaerobic growth, and succinate dehydrogenase is used in aerobic growth. Anchors the catalytic components of the fumarate reductase complex to the cell inner membrane, binds quinones. The polypeptide is Fumarate reductase subunit C (Proteus vulgaris).